A 308-amino-acid polypeptide reads, in one-letter code: MRVIFAGTPAVAIPALAAVADSRHELLAVVTRPDAPAGRGRGLSRSPVAAWADEQGVEVLTPARPREPEFLDRLRALAPDCVPVVAYGALVPPVALEIPQHGWVNLHFSLLPAWRGAAPVQHAVLHGDELTGASVFQLEQGLDTGPVYGTLTDEVGPADTSGDLLERLAHSGAGLLTAVLDAIEDGTARAEPQPVDGVSLAPKLTVADARVRWGDPAFAVDRRVRACTPAPGPWTTFRDERVKLGPVTPVADGPELKPGELLVERSRVLAGTATTPVRLGEVRAAGKRAMPASDWARGVRVTVGEVLA.

(6S)-5,6,7,8-tetrahydrofolate is bound at residue 109–112 (SLLP).

It belongs to the Fmt family.

It carries out the reaction L-methionyl-tRNA(fMet) + (6R)-10-formyltetrahydrofolate = N-formyl-L-methionyl-tRNA(fMet) + (6S)-5,6,7,8-tetrahydrofolate + H(+). Its function is as follows. Attaches a formyl group to the free amino group of methionyl-tRNA(fMet). The formyl group appears to play a dual role in the initiator identity of N-formylmethionyl-tRNA by promoting its recognition by IF2 and preventing the misappropriation of this tRNA by the elongation apparatus. The protein is Methionyl-tRNA formyltransferase of Salinispora arenicola (strain CNS-205).